The sequence spans 628 residues: Very-long-chain aldehyde decarbonylase GL1-2 (628 aa).

The next 5 helical transmembrane spans lie at 37-57, 131-151, 191-211, 299-319, and 331-351; these read GAAP…ARGL, GWAI…YWAH, VVIG…VGLV, DFVF…PFVL, and FVLL…WCCS. The Fatty acid hydroxylase domain occupies 137-277; that stretch reads LLHVLVAEPL…MPIFDLLGGT (141 aa).

Belongs to the sterol desaturase family. In terms of assembly, homodimer. Expressed in germinating seeds, radicals and leaves.

Its subcellular location is the endoplasmic reticulum membrane. The catalysed reaction is a long-chain fatty aldehyde + 2 NADPH + O2 + H(+) = a long-chain alkane + formate + 2 NADP(+) + H2O. Its function is as follows. Aldehyde decarbonylase involved in the conversion of aldehydes to alkanes. Core component of a very-long-chain alkane synthesis complex. Required for the formation of wax layers conferring cuticular permeability and drought tolerance. This chain is Very-long-chain aldehyde decarbonylase GL1-2, found in Oryza sativa subsp. japonica (Rice).